The primary structure comprises 62 residues: Calmodulin regulator protein PCP4 (62 aa).

The segment at M1–E40 is disordered. Positions G12 to E28 are enriched in basic and acidic residues. The interval E28–E40 is acidic; binds calcium and is required for modulating the calcium-binding kinetics of calmodulin. One can recognise an IQ domain in the interval T39–S62.

It belongs to the PCP4 family. As to quaternary structure, binds to both calcium-free and calcium-bound calmodulin. The affinity for the calcium-bound form is 50-fold greater.

In terms of biological role, functions as a modulator of calcium-binding by calmodulin. Thereby, regulates calmodulin activity and the different processes it controls. For instance, may play a role in neuronal differentiation through activation of calmodulin-dependent kinase signaling pathways. In Bos taurus (Bovine), this protein is Calmodulin regulator protein PCP4.